The primary structure comprises 340 residues: Glutamine synthetase (340 aa).

Positions 3 to 82 (IKAEYIWIDG…LCEVLHTDLT (80 aa)) constitute a GS beta-grasp domain. A GS catalytic domain is found at 88–340 (TRALLRPVAE…CTELARREQI (253 aa)). The Mg(2+) site is built by Glu-109, Glu-111, Glu-171, and Glu-178. An L-glutamate-binding site is contributed by Glu-276.

It belongs to the glutamine synthetase family. In terms of assembly, homooctamer and homotetramer. Mg(2+) is required as a cofactor.

The protein resides in the cytoplasm. It catalyses the reaction L-glutamate + NH4(+) + ATP = L-glutamine + ADP + phosphate + H(+). Catalyzes the ATP-dependent biosynthesis of glutamine from glutamate and ammonia. The sequence is that of Glutamine synthetase from Streptomyces hygroscopicus.